The sequence spans 373 residues: T-protein (373 aa).

One can recognise a Chorismate mutase domain in the interval 1–90; it reads MVAELTALRD…ESYSSENDKG (90 aa). Residues 99 to 361 enclose the Prephenate/arogenate dehydrogenase domain; it reads RPVVIVGGGG…DYAQRFQSES (263 aa).

It in the C-terminal section; belongs to the prephenate/arogenate dehydrogenase family.

It is found in the cytoplasm. The enzyme catalyses chorismate = prephenate. It catalyses the reaction prephenate + NAD(+) = 3-(4-hydroxyphenyl)pyruvate + CO2 + NADH. It functions in the pathway amino-acid biosynthesis; L-tyrosine biosynthesis; (4-hydroxyphenyl)pyruvate from prephenate (NAD(+) route): step 1/1. The protein operates within metabolic intermediate biosynthesis; prephenate biosynthesis; prephenate from chorismate: step 1/1. In Escherichia coli (strain K12), this protein is T-protein (tyrA).